A 639-amino-acid polypeptide reads, in one-letter code: Chaperone protein DnaK (639 aa).

T198 is subject to Phosphothreonine; by autocatalysis. Residues 603–618 show a composition bias toward low complexity; the sequence is AKAQTQGGAQEGAAKQ. Residues 603 to 639 are disordered; the sequence is AKAQTQGGAQEGAAKQSNATADDVVDAEFEEVKDDKK. Acidic residues predominate over residues 625–639; that stretch reads DVVDAEFEEVKDDKK.

The protein belongs to the heat shock protein 70 family.

Acts as a chaperone. The polypeptide is Chaperone protein DnaK (Shewanella oneidensis (strain ATCC 700550 / JCM 31522 / CIP 106686 / LMG 19005 / NCIMB 14063 / MR-1)).